A 420-amino-acid polypeptide reads, in one-letter code: Histidine--tRNA ligase (420 aa).

Belongs to the class-II aminoacyl-tRNA synthetase family. Homodimer.

It is found in the cytoplasm. It carries out the reaction tRNA(His) + L-histidine + ATP = L-histidyl-tRNA(His) + AMP + diphosphate + H(+). The sequence is that of Histidine--tRNA ligase from Nitrosomonas europaea (strain ATCC 19718 / CIP 103999 / KCTC 2705 / NBRC 14298).